Here is a 187-residue protein sequence, read N- to C-terminus: dTTP/UTP pyrophosphatase (187 aa).

Asp-65 functions as the Proton acceptor in the catalytic mechanism.

This sequence belongs to the Maf family. YhdE subfamily. The cofactor is a divalent metal cation.

The protein resides in the cytoplasm. The catalysed reaction is dTTP + H2O = dTMP + diphosphate + H(+). It catalyses the reaction UTP + H2O = UMP + diphosphate + H(+). Its function is as follows. Nucleoside triphosphate pyrophosphatase that hydrolyzes dTTP and UTP. May have a dual role in cell division arrest and in preventing the incorporation of modified nucleotides into cellular nucleic acids. This chain is dTTP/UTP pyrophosphatase, found in Pyrococcus abyssi (strain GE5 / Orsay).